The sequence spans 948 residues: MAQQYQPGQRWISDSEAELGLGTVLAQDGRLLTVLYPATGDTRQYALRNAPLTRVRFSPGDSITHFEGWKMTVQEVDDVDGLLVYHGLNGQHEQVTLPETQLSNFIQFRLASDRLFAGQIDPLAWFSLRYHTLEHTSRQLQSSLWGLGGVRAQPIAHQLHIAREVADRIAPRVLLADEVGLGKTIEAGLVIHRQLLSGRASRVLILVPENLQHQWLVEMRRRFNLQVALFDEERFIESDATNPFEDTQLALVALEWLVDDEKAQDALFAAGWDLLVVDEAHHLVWHEDKASAEYSLVEQLAEVIPGVLLLTATPEQLGQDSHFARLRLLDPNRFHDLHAFRAESENYRPVAEAVQELLDKGRLSPKAHETIQGFLGNEGEALLTAVNDGDTEASARLVRELLDRHGTGRVLFRNTRAAVQGFPERKLHAYPLPNPDEYMELPLGEHAELYPEVSFQSQPDVEEEHRWWRFDPRVEWLIDQLKMLKRTKVLVICAHAETAMDLEDALRVRSGIPATVFHEGMNILERDRAAAYFADEEFGAQVLICSEIGSEGRNFQFSHHLVLFDLPSHPDLLEQRIGRLDRIGQKHVIELHVPYLETSPQERLFQWYHEALNAFLNTCPTGNALQHQFGPRLLPLLENADDGEWQALIDEARAERERLEQELHTGRDRLLELNSGGAGEGDALVEDILEQDDQFALPIYMETLFDAFGIDSEDHSENALILKPSEKMLDASFPLGDDEGVTITYDRNQALSREDMQFITWEHPMVQGGMDLVLSGSMGNTAVALIKNKALKPGTVLLELLYVSEVVAPRSLQLGRYLPPAALRCLLDANGNDLSGRVTFETLNDQLESVPRASANKFIQAQRDQLTPRINAGEEKITPRHAERVAEAKRRLAADTDEELARLTALQAVNPTVRDSELVALRTQREQGLAMLDKAALRLEAIRVLVAG.

The region spanning 164-332 (EVADRIAPRV…FARLRLLDPN (169 aa)) is the Helicase ATP-binding domain. 177-184 (DEVGLGKT) serves as a coordination point for ATP. The DEAH box motif lies at 278–281 (DEAH). Positions 473–627 (RVEWLIDQLK…TCPTGNALQH (155 aa)) constitute a Helicase C-terminal domain.

This sequence belongs to the SNF2/RAD54 helicase family. RapA subfamily. As to quaternary structure, interacts with the RNAP. Has a higher affinity for the core RNAP than for the holoenzyme. Its ATPase activity is stimulated by binding to RNAP.

Transcription regulator that activates transcription by stimulating RNA polymerase (RNAP) recycling in case of stress conditions such as supercoiled DNA or high salt concentrations. Probably acts by releasing the RNAP, when it is trapped or immobilized on tightly supercoiled DNA. Does not activate transcription on linear DNA. Probably not involved in DNA repair. This Pseudomonas fluorescens (strain SBW25) protein is RNA polymerase-associated protein RapA.